The sequence spans 628 residues: Leucine-rich repeat and fibronectin type-III domain-containing protein 3 (628 aa).

Positions 1 to 16 (MAVLPLLLCLLPLAPA) are cleaved as a signal peptide. The Extracellular portion of the chain corresponds to 17-540 (SSPPQPASPS…APHAPFLGGT (524 aa)). One can recognise an LRRNT domain in the interval 19–59 (PPQPASPSPCPRRCRCQTQSLPLSVLCPGAGLLFVPPSLDR). 7 LRR repeats span residues 60-83 (RAAE…ANMT), 84-105 (GLLH…AFSD), 108-129 (ALRA…QLRG), 132-153 (NLRH…ALDD), 157-178 (TLED…ALGR), 181-202 (NVNT…AFSR), and 205-226 (KLAR…PLFS). The LRRCT domain occupies 249–295 (NPLHCNCELVWLRRLAREDDLEACASPPALGGRYFWAVGEEEFVCEP). In terms of domain architecture, Ig-like spans 295-382 (PPVVTHRSPP…GEATAAVELT (88 aa)). A disulfide bridge links Cys317 with Cys366. N-linked (GlcNAc...) asparagine glycans are attached at residues Asn348 and Asn393. Residues 380-433 (ELTVGPPPPPQLANSTSCDPPRDGEPDALTPPSAASASASAKAAEAGPPTDRGV) are disordered. Residues 410–428 (PPSAASASASAKAAEAGPP) show a composition bias toward low complexity. The Fibronectin type-III domain occupies 427-525 (PPTDRGVQVT…GCNRFSTEPA (99 aa)). A helical membrane pass occupies residues 541 to 561 (MIIALGGVIVASVLVFIFVLL). The Cytoplasmic portion of the chain corresponds to 562–628 (MRYKVHGGQP…WGPSHEPMGP (67 aa)). The disordered stretch occupies residues 570–609 (QPPGKTKASAPVSSVCSQTNGALGPMPAPPAPEPSAPRAH). Polar residues predominate over residues 580 to 590 (PVSSVCSQTNG). The segment covering 595–604 (MPAPPAPEPS) has biased composition (pro residues).

This sequence belongs to the LRFN family. Can form heteromeric complexes with LRFN1, LRFN2, LRFN4 and LRFN5. Able to form homomeric complexes across cell junctions, between adjacent cells. Does not interact with DLG4. Post-translationally, N-glycosylated.

It localises to the cell membrane. The protein resides in the cell projection. It is found in the axon. The protein localises to the dendrite. Its subcellular location is the synapse. It localises to the presynaptic cell membrane. The protein resides in the postsynaptic cell membrane. Its function is as follows. Cell adhesion molecule that mediates homophilic cell-cell adhesion in a Ca(2+)-independent manner. Promotes neurite outgrowth in hippocampal neurons. This is Leucine-rich repeat and fibronectin type-III domain-containing protein 3 (LRFN3) from Bos taurus (Bovine).